The sequence spans 262 residues: Hydroxyethylthiazole kinase (262 aa).

Residue Met50 participates in substrate binding. Arg125 and Thr171 together coordinate ATP. Residue Gly198 coordinates substrate.

Belongs to the Thz kinase family. Mg(2+) is required as a cofactor.

It carries out the reaction 5-(2-hydroxyethyl)-4-methylthiazole + ATP = 4-methyl-5-(2-phosphooxyethyl)-thiazole + ADP + H(+). It participates in cofactor biosynthesis; thiamine diphosphate biosynthesis; 4-methyl-5-(2-phosphoethyl)-thiazole from 5-(2-hydroxyethyl)-4-methylthiazole: step 1/1. Functionally, catalyzes the phosphorylation of the hydroxyl group of 4-methyl-5-beta-hydroxyethylthiazole (THZ). This is Hydroxyethylthiazole kinase from Escherichia coli O17:K52:H18 (strain UMN026 / ExPEC).